The chain runs to 433 residues: Acetyl-CoA-benzylalcohol acetyltransferase (433 aa).

Active-site proton acceptor residues include H152 and D377.

Belongs to the plant acyltransferase family.

It carries out the reaction benzyl alcohol + acetyl-CoA = benzyl acetate + CoA. The catalysed reaction is (E)-cinnamyl alcohol + acetyl-CoA = (E)-cinnamyl acetate + CoA. Functionally, involved in the biosynthesis of benzyl acetate, a major constituent of the floral scent. Can use benzylalcohol, cinnamylalcohol, 3-cis-hexene-1-ol or heptanol as substrates. Has some activity with 2-phenylethanol and 2-naphtalene-ethanol. This is Acetyl-CoA-benzylalcohol acetyltransferase (BEAT) from Clarkia breweri (Fairy fans).